We begin with the raw amino-acid sequence, 295 residues long: Light-independent protochlorophyllide reductase iron-sulfur ATP-binding protein (295 aa).

ATP-binding positions include 39 to 44 (GIGKST) and lysine 68. A Mg(2+)-binding site is contributed by serine 43. 2 residues coordinate [4Fe-4S] cluster: cysteine 124 and cysteine 158. 209-210 (NR) contacts ATP.

This sequence belongs to the NifH/BchL/ChlL family. Homodimer. Protochlorophyllide reductase is composed of three subunits; ChlL, ChlN and ChlB. [4Fe-4S] cluster is required as a cofactor.

It catalyses the reaction chlorophyllide a + oxidized 2[4Fe-4S]-[ferredoxin] + 2 ADP + 2 phosphate = protochlorophyllide a + reduced 2[4Fe-4S]-[ferredoxin] + 2 ATP + 2 H2O. It participates in porphyrin-containing compound metabolism; chlorophyll biosynthesis (light-independent). In terms of biological role, component of the dark-operative protochlorophyllide reductase (DPOR) that uses Mg-ATP and reduced ferredoxin to reduce ring D of protochlorophyllide (Pchlide) to form chlorophyllide a (Chlide). This reaction is light-independent. The L component serves as a unique electron donor to the NB-component of the complex, and binds Mg-ATP. This chain is Light-independent protochlorophyllide reductase iron-sulfur ATP-binding protein, found in Prochlorococcus marinus (strain MIT 9215).